The sequence spans 271 residues: Ribosomal RNA small subunit methyltransferase A (271 aa).

S-adenosyl-L-methionine-binding residues include histidine 11, leucine 13, glycine 38, glutamate 59, aspartate 84, and asparagine 109.

This sequence belongs to the class I-like SAM-binding methyltransferase superfamily. rRNA adenine N(6)-methyltransferase family. RsmA subfamily.

Its subcellular location is the cytoplasm. It carries out the reaction adenosine(1518)/adenosine(1519) in 16S rRNA + 4 S-adenosyl-L-methionine = N(6)-dimethyladenosine(1518)/N(6)-dimethyladenosine(1519) in 16S rRNA + 4 S-adenosyl-L-homocysteine + 4 H(+). In terms of biological role, specifically dimethylates two adjacent adenosines (A1518 and A1519) in the loop of a conserved hairpin near the 3'-end of 16S rRNA in the 30S particle. May play a critical role in biogenesis of 30S subunits. This chain is Ribosomal RNA small subunit methyltransferase A, found in Trichormus variabilis (strain ATCC 29413 / PCC 7937) (Anabaena variabilis).